The chain runs to 283 residues: Tumor necrosis factor receptor superfamily member 14 (283 aa).

An N-terminal signal peptide occupies residues 1–38 (MEPPGDWGPPPWRSTPKTDVLRLVLYLTFLGAPCYAPA). At 39 to 202 (LPSCKEDEYP…GAGTSSSHWV (164 aa)) the chain is on the extracellular side. Disulfide bonds link C42–C53, C54–C67, C57–C75, C78–C93, C96–C111, C99–C119, C121–C138, and C127–C135. 3 TNFR-Cys repeats span residues 42 to 75 (CKED…GTVC), 78 to 119 (CPPG…NAVC), and 121 to 162 (CSPG…DTLC). N110 is a glycosylation site (N-linked (GlcNAc...) asparagine). N-linked (GlcNAc...) asparagine glycosylation occurs at N173. The chain crosses the membrane as a helical span at residues 203–223 (WWFLSGSLVIVIVCSTVGLII). The Cytoplasmic segment spans residues 224 to 283 (CVKRRKPRGDVVKVIVSVQRKRQEAEGEATVIEALQAPPDVTTVAVEETIPSFTGRSPNH). A Phosphoserine modification is found at S240.

Belongs to the tumor necrosis factor receptor superfamily. In terms of assembly, interacts with TRAF2, TRAF3 and TRAF5. Interacts (via CRD1/TNFR-Cys 1) with CD160; this interaction is direct. Interacts with LTA and TNFSF14. Interacts (via CRD1/TNFR-Cys 1) in cis and trans with BTLA; the cis interactions inhibits the trans interactions. As to quaternary structure, (Microbial infection) Interacts with herpes simplex virus 1/HHV-1 envelope glycoprotein D. (Microbial infection) Interacts with herpes simplex virus 2/HHV-2 envelope glycoprotein D. Post-translationally, N-glycosylated. As to expression, widely expressed, with the highest expression in lung, spleen and thymus. Expressed in a subpopulation of B cells and monocytes. Expressed in naive T cells.

It localises to the cell membrane. Its function is as follows. Receptor for four distinct ligands: The TNF superfamily members TNFSF14/LIGHT and homotrimeric LTA/lymphotoxin-alpha and the immunoglobulin superfamily members BTLA and CD160, altogether defining a complex stimulatory and inhibitory signaling network. Signals via the TRAF2-TRAF3 E3 ligase pathway to promote immune cell survival and differentiation. Participates in bidirectional cell-cell contact signaling between antigen presenting cells and lymphocytes. In response to ligation of TNFSF14/LIGHT, delivers costimulatory signals to T cells, promoting cell proliferation and effector functions. Interacts with CD160 on NK cells, enhancing IFNG production and anti-tumor immune response. In the context of bacterial infection, acts as a signaling receptor on epithelial cells for CD160 from intraepithelial lymphocytes, triggering the production of antimicrobial proteins and pro-inflammatory cytokines. Upon binding to CD160 on activated CD4+ T cells, down-regulates CD28 costimulatory signaling, restricting memory and alloantigen-specific immune response. May interact in cis (on the same cell) or in trans (on other cells) with BTLA. In cis interactions, appears to play an immune regulatory role inhibiting in trans interactions in naive T cells to maintain a resting state. In trans interactions, can predominate during adaptive immune response to provide survival signals to effector T cells. Functionally, (Microbial infection) Acts as a receptor for Herpes simplex virus 1/HHV-1. In terms of biological role, (Microbial infection) Acts as a receptor for Herpes simplex virus 2/HHV-2. This Homo sapiens (Human) protein is Tumor necrosis factor receptor superfamily member 14.